A 62-amino-acid polypeptide reads, in one-letter code: Large ribosomal subunit protein bL28 (62 aa).

Belongs to the bacterial ribosomal protein bL28 family.

This is Large ribosomal subunit protein bL28 from Halalkalibacterium halodurans (strain ATCC BAA-125 / DSM 18197 / FERM 7344 / JCM 9153 / C-125) (Bacillus halodurans).